A 176-amino-acid polypeptide reads, in one-letter code: Large ribosomal subunit protein uL10 (176 aa).

The protein belongs to the universal ribosomal protein uL10 family. As to quaternary structure, part of the ribosomal stalk of the 50S ribosomal subunit. The N-terminus interacts with L11 and the large rRNA to form the base of the stalk. The C-terminus forms an elongated spine to which L12 dimers bind in a sequential fashion forming a multimeric L10(L12)X complex.

Its function is as follows. Forms part of the ribosomal stalk, playing a central role in the interaction of the ribosome with GTP-bound translation factors. The sequence is that of Large ribosomal subunit protein uL10 (rplJ) from Streptomyces coelicolor (strain ATCC BAA-471 / A3(2) / M145).